Reading from the N-terminus, the 134-residue chain is Small ribosomal subunit protein uS11 (134 aa).

The protein belongs to the universal ribosomal protein uS11 family. In terms of assembly, part of the 30S ribosomal subunit. Interacts with proteins S7 and S18. Binds to IF-3.

Its function is as follows. Located on the platform of the 30S subunit, it bridges several disparate RNA helices of the 16S rRNA. Forms part of the Shine-Dalgarno cleft in the 70S ribosome. In Corynebacterium diphtheriae (strain ATCC 700971 / NCTC 13129 / Biotype gravis), this protein is Small ribosomal subunit protein uS11.